A 317-amino-acid chain; its full sequence is GTP cyclohydrolase MptA (317 aa).

This sequence belongs to the GTP cyclohydrolase IV family. Homodimer. Fe(2+) is required as a cofactor.

It catalyses the reaction GTP + H2O = 7,8-dihydroneopterin 2',3'-cyclic phosphate + formate + diphosphate + H(+). The protein operates within cofactor biosynthesis; 5,6,7,8-tetrahydromethanopterin biosynthesis. Converts GTP to 7,8-dihydro-D-neopterin 2',3'-cyclic phosphate, the first intermediate in the biosynthesis of coenzyme methanopterin. This chain is GTP cyclohydrolase MptA, found in Methanococcoides burtonii (strain DSM 6242 / NBRC 107633 / OCM 468 / ACE-M).